A 305-amino-acid chain; its full sequence is MGRKKEVTNAQRQRPEILAQTIKTGIIKSNLVPMFAGLTLALYKYKISPFEKIPEILFAFIGSILIIGAAGAFNNLYDRDIDSIMERTKNRPTVTGDISPKTALWLGIFMTIFGLVFLALTTYLAAILGFIGLFLYVVPYTMWSKRRTIYNTEIGSVSGAMPPLIGWAAIYPDVTHPAIIGLFIIMIIWQMPHFYAIAIRKHKEYEAANVPMLPVVKGVKRTYIQTNVYLVILIIISILLGSLSIGLMLVSLLLSILWLALSIYGYKKMDSEKWAKSLFIFSLFHMTILFSTVIIYSLVGIFFGS.

The next 8 helical transmembrane spans lie at 22–42 (IKTG…TLAL), 53–73 (IPEI…AGAF), 94–114 (VTGD…TIFG), 115–135 (LVFL…GLFL), 154–174 (IGSV…YPDV), 179–199 (IIGL…AIAI), 230–250 (LVIL…LMLV), and 283–303 (LFHM…GIFF).

Belongs to the UbiA prenyltransferase family. Protoheme IX farnesyltransferase subfamily. Interacts with CtaA.

It is found in the cell membrane. It carries out the reaction heme b + (2E,6E)-farnesyl diphosphate + H2O = Fe(II)-heme o + diphosphate. The protein operates within porphyrin-containing compound metabolism; heme O biosynthesis; heme O from protoheme: step 1/1. Functionally, converts heme B (protoheme IX) to heme O by substitution of the vinyl group on carbon 2 of heme B porphyrin ring with a hydroxyethyl farnesyl side group. This is Protoheme IX farnesyltransferase 1 from Bacillus cytotoxicus (strain DSM 22905 / CIP 110041 / 391-98 / NVH 391-98).